A 151-amino-acid chain; its full sequence is Small ribosomal subunit protein uS15 (151 aa).

Belongs to the universal ribosomal protein uS15 family. As to quaternary structure, component of the small ribosomal subunit. Part of the small subunit (SSU) processome, composed of more than 70 proteins and the RNA chaperone small nucleolar RNA (snoRNA) U3.

It localises to the cytoplasm. The protein localises to the nucleus. The protein resides in the nucleolus. Component of the small ribosomal subunit. The ribosome is a large ribonucleoprotein complex responsible for the synthesis of proteins in the cell. Part of the small subunit (SSU) processome, first precursor of the small eukaryotic ribosomal subunit. During the assembly of the SSU processome in the nucleolus, many ribosome biogenesis factors, an RNA chaperone and ribosomal proteins associate with the nascent pre-rRNA and work in concert to generate RNA folding, modifications, rearrangements and cleavage as well as targeted degradation of pre-ribosomal RNA by the RNA exosome. This is Small ribosomal subunit protein uS15 (rps-13) from Caenorhabditis elegans.